The chain runs to 396 residues: 1-deoxy-D-xylulose 5-phosphate reductoisomerase (396 aa).

The NADPH site is built by T10, G11, S12, I13, and N123. Position 124 (K124) interacts with 1-deoxy-D-xylulose 5-phosphate. E125 is an NADPH binding site. D149 contributes to the Mn(2+) binding site. 1-deoxy-D-xylulose 5-phosphate-binding residues include S150, E151, S185, and H208. A Mn(2+)-binding site is contributed by E151. G214 provides a ligand contact to NADPH. Residues S221, N226, K227, and E230 each coordinate 1-deoxy-D-xylulose 5-phosphate. E230 contacts Mn(2+).

This sequence belongs to the DXR family. Mg(2+) serves as cofactor. Mn(2+) is required as a cofactor.

It catalyses the reaction 2-C-methyl-D-erythritol 4-phosphate + NADP(+) = 1-deoxy-D-xylulose 5-phosphate + NADPH + H(+). It participates in isoprenoid biosynthesis; isopentenyl diphosphate biosynthesis via DXP pathway; isopentenyl diphosphate from 1-deoxy-D-xylulose 5-phosphate: step 1/6. Its function is as follows. Catalyzes the NADPH-dependent rearrangement and reduction of 1-deoxy-D-xylulose-5-phosphate (DXP) to 2-C-methyl-D-erythritol 4-phosphate (MEP). This chain is 1-deoxy-D-xylulose 5-phosphate reductoisomerase, found in Shewanella sp. (strain MR-4).